Reading from the N-terminus, the 406-residue chain is Argininosuccinate synthase (406 aa).

Residues 11–19 (AYSGGLDTS) and A38 contribute to the ATP site. L-citrulline contacts are provided by Y91 and S96. G121 is a binding site for ATP. Positions 123, 127, and 128 each coordinate L-aspartate. Residue N127 coordinates L-citrulline. 5 residues coordinate L-citrulline: R131, S181, S190, E266, and Y278.

Belongs to the argininosuccinate synthase family. Type 1 subfamily. In terms of assembly, homotetramer.

Its subcellular location is the cytoplasm. It catalyses the reaction L-citrulline + L-aspartate + ATP = 2-(N(omega)-L-arginino)succinate + AMP + diphosphate + H(+). The protein operates within amino-acid biosynthesis; L-arginine biosynthesis; L-arginine from L-ornithine and carbamoyl phosphate: step 2/3. The chain is Argininosuccinate synthase from Campylobacter hominis (strain ATCC BAA-381 / DSM 21671 / CCUG 45161 / LMG 19568 / NCTC 13146 / CH001A).